A 94-amino-acid chain; its full sequence is Small ubiquitin-related modifier 3 (94 aa).

Residue Lys11 forms a Glycyl lysine isopeptide (Lys-Gly) (interchain with G-Cter in SUMO) linkage. The region spanning 15-92 (DHINLKVAGQ…IDVFQQQTGG (78 aa)) is the Ubiquitin-like domain. Gly92 is covalently cross-linked (Glycyl lysine isopeptide (Gly-Lys) (interchain with K-? in acceptor proteins)). The propeptide occupies 93–94 (LC).

This sequence belongs to the ubiquitin family. SUMO subfamily. In terms of assembly, interacts with SAE2 and UBE2I. Covalently attached to a number of proteins. Polymeric chains can be formed through Lys-11 cross-linking. In terms of processing, cleavage of precursor form by a sentrin-specific protease is necessary for function.

The protein localises to the cytoplasm. It localises to the nucleus. The protein resides in the PML body. Its function is as follows. Ubiquitin-like protein which can be covalently attached to target lysines either as a monomer or as a lysine-linked polymer. Does not seem to be involved in protein degradation and may function as an antagonist of ubiquitin in the degradation process. Plays a role in a number of cellular processes such as nuclear transport, DNA replication and repair, mitosis and signal transduction. Covalent attachment to its substrates requires prior activation by the E1 complex SAE1-SAE2 and linkage to the E2 enzyme UBE2I. This Gallus gallus (Chicken) protein is Small ubiquitin-related modifier 3.